The chain runs to 329 residues: Beta-ketoacyl-[acyl-carrier-protein] synthase III (329 aa).

Active-site residues include C114 and H255. The ACP-binding stretch occupies residues Q256 to R260. Residue N285 is part of the active site.

This sequence belongs to the thiolase-like superfamily. FabH family. In terms of assembly, homodimer.

The protein localises to the cytoplasm. The enzyme catalyses malonyl-[ACP] + acetyl-CoA + H(+) = 3-oxobutanoyl-[ACP] + CO2 + CoA. It participates in lipid metabolism; fatty acid biosynthesis. In terms of biological role, catalyzes the condensation reaction of fatty acid synthesis by the addition to an acyl acceptor of two carbons from malonyl-ACP. Catalyzes the first condensation reaction which initiates fatty acid synthesis and may therefore play a role in governing the total rate of fatty acid production. Possesses both acetoacetyl-ACP synthase and acetyl transacylase activities. Its substrate specificity determines the biosynthesis of branched-chain and/or straight-chain of fatty acids. The sequence is that of Beta-ketoacyl-[acyl-carrier-protein] synthase III from Thermosynechococcus vestitus (strain NIES-2133 / IAM M-273 / BP-1).